The following is a 289-amino-acid chain: mRNA-capping enzyme small subunit (289 aa).

Heterodimer of a large and a small subunit.

It localises to the virion. The catalysed reaction is a 5'-end (5'-triphosphoguanosine)-ribonucleoside in mRNA + S-adenosyl-L-methionine = a 5'-end (N(7)-methyl 5'-triphosphoguanosine)-ribonucleoside in mRNA + S-adenosyl-L-homocysteine. Catalyzes the last reaction in the mRNA cap formation pathway. The polypeptide is mRNA-capping enzyme small subunit (Fowlpox virus (strain NVSL) (FPV)).